The chain runs to 141 residues: Granulocyte-macrophage colony-stimulating factor (141 aa).

An N-terminal signal peptide occupies residues 1–17; the sequence is MWLQNLLFLGIVVYSLS. Residue S22 is glycosylated (O-linked (GalNAc...) serine). O-linked (GalNAc...) threonine glycosylation is present at T27. Intrachain disulfides connect C68–C110 and C102–C135. N-linked (GlcNAc...) asparagine glycans are attached at residues N83 and N92.

Belongs to the GM-CSF family. In terms of assembly, monomer. The signaling GM-CSF receptor complex is a dodecamer of two head-to-head hexamers of two alpha, two beta, and two ligand subunits.

It is found in the secreted. Its function is as follows. Cytokine that stimulates the growth and differentiation of hematopoietic precursor cells from various lineages, including granulocytes, macrophages, eosinophils and erythrocytes. In Mus musculus (Mouse), this protein is Granulocyte-macrophage colony-stimulating factor (Csf2).